The sequence spans 124 residues: Small ribosomal subunit protein uS12 (124 aa).

Asp89 carries the 3-methylthioaspartic acid modification.

Belongs to the universal ribosomal protein uS12 family. Part of the 30S ribosomal subunit. Contacts proteins S8 and S17. May interact with IF1 in the 30S initiation complex.

Its function is as follows. With S4 and S5 plays an important role in translational accuracy. Interacts with and stabilizes bases of the 16S rRNA that are involved in tRNA selection in the A site and with the mRNA backbone. Located at the interface of the 30S and 50S subunits, it traverses the body of the 30S subunit contacting proteins on the other side and probably holding the rRNA structure together. The combined cluster of proteins S8, S12 and S17 appears to hold together the shoulder and platform of the 30S subunit. The polypeptide is Small ribosomal subunit protein uS12 (Haemophilus ducreyi (strain 35000HP / ATCC 700724)).